A 200-amino-acid polypeptide reads, in one-letter code: GTP cyclohydrolase 1 (200 aa).

Zn(2+) is bound by residues C87, H90, and C158.

Belongs to the GTP cyclohydrolase I family. As to quaternary structure, toroid-shaped homodecamer, composed of two pentamers of five dimers.

The catalysed reaction is GTP + H2O = 7,8-dihydroneopterin 3'-triphosphate + formate + H(+). It functions in the pathway cofactor biosynthesis; 7,8-dihydroneopterin triphosphate biosynthesis; 7,8-dihydroneopterin triphosphate from GTP: step 1/1. This chain is GTP cyclohydrolase 1, found in Xanthomonas euvesicatoria pv. vesicatoria (strain 85-10) (Xanthomonas campestris pv. vesicatoria).